The following is a 273-amino-acid chain: 2,3,4,5-tetrahydropyridine-2,6-dicarboxylate N-succinyltransferase (273 aa).

Residues arginine 104 and aspartate 141 each coordinate substrate.

It belongs to the transferase hexapeptide repeat family. As to quaternary structure, homotrimer.

Its subcellular location is the cytoplasm. The catalysed reaction is (S)-2,3,4,5-tetrahydrodipicolinate + succinyl-CoA + H2O = (S)-2-succinylamino-6-oxoheptanedioate + CoA. It participates in amino-acid biosynthesis; L-lysine biosynthesis via DAP pathway; LL-2,6-diaminopimelate from (S)-tetrahydrodipicolinate (succinylase route): step 1/3. This Neisseria gonorrhoeae (strain ATCC 700825 / FA 1090) protein is 2,3,4,5-tetrahydropyridine-2,6-dicarboxylate N-succinyltransferase.